The chain runs to 581 residues: Adenine deaminase (581 aa).

Belongs to the metallo-dependent hydrolases superfamily. Adenine deaminase family. Mn(2+) is required as a cofactor.

The catalysed reaction is adenine + H2O + H(+) = hypoxanthine + NH4(+). This chain is Adenine deaminase, found in Brucella abortus (strain 2308).